Reading from the N-terminus, the 486-residue chain is Triplex capsid protein 1 (486 aa).

Belongs to the herpesviridae TRX1 protein family. Interacts with TRX2, MCP and capsid vertex component 2/CVC2.

The protein localises to the virion. It is found in the host nucleus. Its function is as follows. Structural component of the T=16 icosahedral capsid. The capsid is composed of pentamers and hexamers of major capsid protein/MCP, which are linked together by heterotrimers called triplexes. These triplexes are formed by a single molecule of triplex protein 1/TRX1 and two copies of triplex protein 2/TRX2. Additionally, TRX1 is required for efficient transport of TRX2 to the nucleus, which is the site of capsid assembly. This chain is Triplex capsid protein 1, found in Psittacid herpesvirus 1 (isolate Amazon parrot/-/97-0001/1997) (PsHV-1).